A 257-amino-acid polypeptide reads, in one-letter code: Short chain dehydrogenase helC (257 aa).

Positions 1-22 (MNTAIITGAAQGVGLCIAEALA) are cleaved as a signal peptide. Val13 is an NADP(+) binding site. Residue Asn46 is glycosylated (N-linked (GlcNAc...) asparagine). Residues Asp60 and Asn87 each coordinate NADP(+). N-linked (GlcNAc...) asparagine glycosylation occurs at Asn110. Tyr154, Lys158, Ile185, and Thr187 together coordinate NADP(+). Tyr154 acts as the Proton acceptor in catalysis. The Lowers pKa of active site Tyr role is filled by Lys158.

It belongs to the short-chain dehydrogenases/reductases (SDR) family.

It participates in mycotoxin biosynthesis. In terms of biological role, short chain dehydrogenase; part of the gene cluster that mediates the biosynthesis of helvolic acid, an antibacterial nortriterpenoid. Protostadienol synthase helA cyclizes (3S)-oxidosqualene to (17Z)-protosta-17(20),24-dien-3-beta-ol (protostadienol). The synthesis of protostadienol is followed by several steps of monooxygenation, dehydrogenation, and acyl transfer to yield the final helvolic acid. Following the cyclization to the tetracyclic protostadienol by helA, cytochrome P450 monooxygenases helB1-mediated and helB2-mediated oxidation at C-4 and C-16, acyltransferase helD2-dependent acetylation of 16-OH, oxidation of C-21 by cytochrome P450 monooxygenase helB4, and short chain dehydrogenase helC-dependent oxidative decarboxylation yield the fusidane skeleton. This intermediate is further modified in three additional steps mediated by the cytochrome P450 monooxygenase helB3, the acyltransferase helD1, and the 3-ketosteroid 1-dehydrogenase helE to give helvolic acid. Compared with the late stages in the biosynthesis of helvolic acid, enzymes involved in the early stage modifications act in a relatively strict order. The hydroxylation of C-16 by helB1 and subsequent acetylation by helD2 should occur before the helB3-mediated oxidation of C-21. C-4 demethylation in fusidane-type antibiotics proceeds in an unusual manner though it is also achieved by oxidative decarboxylation. The methyl group at C-4 beta position is oxidized by helB1 and subsequently removed by the short chain dehydrogenase helC. The protein is Short chain dehydrogenase helC of Aspergillus fumigatus (strain ATCC MYA-4609 / CBS 101355 / FGSC A1100 / Af293) (Neosartorya fumigata).